A 458-amino-acid polypeptide reads, in one-letter code: Exodeoxyribonuclease 7 large subunit (458 aa).

The protein belongs to the XseA family. Heterooligomer composed of large and small subunits.

The protein localises to the cytoplasm. The catalysed reaction is Exonucleolytic cleavage in either 5'- to 3'- or 3'- to 5'-direction to yield nucleoside 5'-phosphates.. In terms of biological role, bidirectionally degrades single-stranded DNA into large acid-insoluble oligonucleotides, which are then degraded further into small acid-soluble oligonucleotides. This chain is Exodeoxyribonuclease 7 large subunit, found in Sodalis glossinidius (strain morsitans).